The primary structure comprises 351 residues: Phosphoribosylformylglycinamidine cyclo-ligase (351 aa).

Belongs to the AIR synthase family.

The protein resides in the cytoplasm. It carries out the reaction 2-formamido-N(1)-(5-O-phospho-beta-D-ribosyl)acetamidine + ATP = 5-amino-1-(5-phospho-beta-D-ribosyl)imidazole + ADP + phosphate + H(+). The protein operates within purine metabolism; IMP biosynthesis via de novo pathway; 5-amino-1-(5-phospho-D-ribosyl)imidazole from N(2)-formyl-N(1)-(5-phospho-D-ribosyl)glycinamide: step 2/2. The sequence is that of Phosphoribosylformylglycinamidine cyclo-ligase from Lysinibacillus sphaericus (strain C3-41).